The sequence spans 353 residues: uncharacterized protein (353 aa).

An N-terminal signal peptide occupies residues 1-20 (MLMRSVCFILLAVLLFSLSA). The N-palmitoyl cysteine moiety is linked to residue C21. C21 is lipidated: S-diacylglycerol cysteine.

Its subcellular location is the cell membrane. This is an uncharacterized protein from Bacillus subtilis (strain 168).